A 317-amino-acid polypeptide reads, in one-letter code: Melanoma-associated antigen 4 (317 aa).

The span at 1 to 14 (MSSEQKSQHCKPEE) shows a compositional bias: basic and acidic residues. Residues 1 to 102 (MSSEQKSQHC…EEGPSTSPDA (102 aa)) form a disordered region. Polar residues predominate over residues 66–82 (PQGASALPTTISFTCWR). Residues 110–309 (LSNKVDELAH…IAYPSLREAA (200 aa)) form the MAGE domain.

In terms of tissue distribution, expressed in many tumors of several types, such as melanoma, head and neck squamous cell carcinoma, lung carcinoma and breast carcinoma, but not in normal tissues except for testes and placenta.

Its function is as follows. Regulates cell proliferation through the inhibition of cell cycle arrest at the G1 phase. Also negatively regulates p53-mediated apoptosis. This Homo sapiens (Human) protein is Melanoma-associated antigen 4 (MAGEA4).